We begin with the raw amino-acid sequence, 278 residues long: Ribosomal RNA small subunit methyltransferase A (278 aa).

S-adenosyl-L-methionine is bound by residues asparagine 27, leucine 29, glycine 54, glutamate 75, aspartate 101, and asparagine 120.

Belongs to the class I-like SAM-binding methyltransferase superfamily. rRNA adenine N(6)-methyltransferase family. RsmA subfamily.

Its subcellular location is the cytoplasm. The catalysed reaction is adenosine(1518)/adenosine(1519) in 16S rRNA + 4 S-adenosyl-L-methionine = N(6)-dimethyladenosine(1518)/N(6)-dimethyladenosine(1519) in 16S rRNA + 4 S-adenosyl-L-homocysteine + 4 H(+). In terms of biological role, specifically dimethylates two adjacent adenosines (A1518 and A1519) in the loop of a conserved hairpin near the 3'-end of 16S rRNA in the 30S particle. May play a critical role in biogenesis of 30S subunits. This is Ribosomal RNA small subunit methyltransferase A from Zymomonas mobilis subsp. mobilis (strain ATCC 31821 / ZM4 / CP4).